The following is a 149-amino-acid chain: Large ribosomal subunit protein bL9 (149 aa).

The protein belongs to the bacterial ribosomal protein bL9 family.

Functionally, binds to the 23S rRNA. The protein is Large ribosomal subunit protein bL9 of Rubrobacter xylanophilus (strain DSM 9941 / JCM 11954 / NBRC 16129 / PRD-1).